We begin with the raw amino-acid sequence, 418 residues long: Serine--tRNA ligase (418 aa).

Residue 232–234 participates in L-serine binding; that stretch reads TAE. ATP is bound by residues 263–265 and Val279; that span reads RRE. Glu286 contacts L-serine. ATP is bound at residue 350 to 353; it reads EISS. Position 385 (Ser385) interacts with L-serine.

This sequence belongs to the class-II aminoacyl-tRNA synthetase family. Type-1 seryl-tRNA synthetase subfamily. As to quaternary structure, homodimer. The tRNA molecule binds across the dimer.

It is found in the cytoplasm. It carries out the reaction tRNA(Ser) + L-serine + ATP = L-seryl-tRNA(Ser) + AMP + diphosphate + H(+). The catalysed reaction is tRNA(Sec) + L-serine + ATP = L-seryl-tRNA(Sec) + AMP + diphosphate + H(+). The protein operates within aminoacyl-tRNA biosynthesis; selenocysteinyl-tRNA(Sec) biosynthesis; L-seryl-tRNA(Sec) from L-serine and tRNA(Sec): step 1/1. In terms of biological role, catalyzes the attachment of serine to tRNA(Ser). Is also able to aminoacylate tRNA(Sec) with serine, to form the misacylated tRNA L-seryl-tRNA(Sec), which will be further converted into selenocysteinyl-tRNA(Sec). This Leptospira biflexa serovar Patoc (strain Patoc 1 / Ames) protein is Serine--tRNA ligase.